A 147-amino-acid polypeptide reads, in one-letter code: Transthyretin (147 aa).

An N-terminal signal peptide occupies residues 1 to 20 (MASHRLLLLCLAGLVFVSEA). Cysteine 30 is modified (sulfocysteine). Residue lysine 35 coordinates L-thyroxine. Glutamate 62 is modified (4-carboxyglutamate). A Phosphoserine modification is found at serine 72. Glutamate 74 contacts L-thyroxine. An N-linked (GlcNAc...) asparagine glycan is attached at asparagine 118. Serine 137 lines the L-thyroxine pocket.

This sequence belongs to the transthyretin family. Homotetramer. Dimer of dimers. In the homotetramer, subunits assemble around a central channel that can accommodate two ligand molecules. Interacts with RBP4. Post-translationally, sulfonation of the reactive cysteine Cys-30 enhances the stability of the native conformation of TTR, avoiding misassembly of the protein leading to amyloid formation. Detected in brain.

It is found in the secreted. Thyroid hormone-binding protein. Probably transports thyroxine from the bloodstream to the brain. This Pan troglodytes (Chimpanzee) protein is Transthyretin (TTR).